A 418-amino-acid polypeptide reads, in one-letter code: MSIAEKIRNIAADARQAAIAMAKLSASAKNELLLAMAGSLVRNTVQLIEENRKDLEAGEAKGLSTAMLDRLMLNEARIKAMADGLREVAALSDPVGEVTRMWTRPNGLRVGKMRIPLGVIGIIYEARPNVTADAAALCLKSGNSVILRGGSEAIHSNLAIARILGEELKRAGIPAAALSVVPFPEREGVLEMLKQEEFIDLIIPRGGESLIRFVVENSRIPVIKHYKGVCHVFVDADADFDMAEKIIVNGKVQRPGVCNALETLLVHKDIAETFIPRIAETLIELKVELRGDDCVRQFVPQATKATEDDWHAEYLELILAVRVVDDLDEAVAHINRYGSLHTEAIVTRDYHNAQRFIREVNSSTVLVNASTRFADGNQLGLGAEIGISTTKLHSFGPMGLEDLTTTKFIVYGDGQVRP.

The protein belongs to the gamma-glutamyl phosphate reductase family.

It localises to the cytoplasm. The catalysed reaction is L-glutamate 5-semialdehyde + phosphate + NADP(+) = L-glutamyl 5-phosphate + NADPH + H(+). The protein operates within amino-acid biosynthesis; L-proline biosynthesis; L-glutamate 5-semialdehyde from L-glutamate: step 2/2. Its function is as follows. Catalyzes the NADPH-dependent reduction of L-glutamate 5-phosphate into L-glutamate 5-semialdehyde and phosphate. The product spontaneously undergoes cyclization to form 1-pyrroline-5-carboxylate. The protein is Gamma-glutamyl phosphate reductase of Geobacter sulfurreducens (strain ATCC 51573 / DSM 12127 / PCA).